A 432-amino-acid chain; its full sequence is Adenosylhomocysteinase (432 aa).

The tract at residues 1–24 (MSAYSPLSAQLDADTDVDVESTRT) is disordered. Substrate contacts are provided by Asp-137 and Glu-162. 163–165 (TTT) contacts NAD(+). Residues Lys-192 and Asp-196 each contribute to the substrate site. Residues Asn-197, 226-231 (GYGYCG), Glu-249, Asn-284, 305-307 (AGH), and Asn-352 contribute to the NAD(+) site.

The protein belongs to the adenosylhomocysteinase family. NAD(+) is required as a cofactor.

The protein resides in the cytoplasm. It catalyses the reaction S-adenosyl-L-homocysteine + H2O = L-homocysteine + adenosine. It participates in amino-acid biosynthesis; L-homocysteine biosynthesis; L-homocysteine from S-adenosyl-L-homocysteine: step 1/1. Its function is as follows. May play a key role in the regulation of the intracellular concentration of adenosylhomocysteine. The polypeptide is Adenosylhomocysteinase (Haloquadratum walsbyi (strain DSM 16790 / HBSQ001)).